A 165-amino-acid polypeptide reads, in one-letter code: Xanthine-guanine phosphoribosyltransferase (165 aa).

Residues 41 to 42 and 98 to 106 contribute to the 5-phospho-alpha-D-ribose 1-diphosphate site; these read RG and DDLTDTGKT. D99 serves as a coordination point for Mg(2+). 2 residues coordinate guanine: D102 and I145. Residues D102 and I145 each coordinate xanthine. Residues 102–106 and 144–145 contribute to the GMP site; these read DTGKT and WI.

The protein belongs to the purine/pyrimidine phosphoribosyltransferase family. XGPT subfamily. As to quaternary structure, homotetramer. The cofactor is Mg(2+).

It is found in the cell inner membrane. The catalysed reaction is GMP + diphosphate = guanine + 5-phospho-alpha-D-ribose 1-diphosphate. The enzyme catalyses XMP + diphosphate = xanthine + 5-phospho-alpha-D-ribose 1-diphosphate. It carries out the reaction IMP + diphosphate = hypoxanthine + 5-phospho-alpha-D-ribose 1-diphosphate. The protein operates within purine metabolism; GMP biosynthesis via salvage pathway; GMP from guanine: step 1/1. It functions in the pathway purine metabolism; XMP biosynthesis via salvage pathway; XMP from xanthine: step 1/1. Functionally, purine salvage pathway enzyme that catalyzes the transfer of the ribosyl-5-phosphate group from 5-phospho-alpha-D-ribose 1-diphosphate (PRPP) to the N9 position of the 6-oxopurines guanine and xanthine to form the corresponding ribonucleotides GMP (guanosine 5'-monophosphate) and XMP (xanthosine 5'-monophosphate), with the release of PPi. To a lesser extent, also acts on hypoxanthine. The polypeptide is Xanthine-guanine phosphoribosyltransferase (Chelativorans sp. (strain BNC1)).